Here is an 880-residue protein sequence, read N- to C-terminus: Alanine--tRNA ligase (880 aa).

The Zn(2+) site is built by His-567, His-571, Cys-669, and His-673.

This sequence belongs to the class-II aminoacyl-tRNA synthetase family. The cofactor is Zn(2+).

It is found in the cytoplasm. The catalysed reaction is tRNA(Ala) + L-alanine + ATP = L-alanyl-tRNA(Ala) + AMP + diphosphate. Its function is as follows. Catalyzes the attachment of alanine to tRNA(Ala) in a two-step reaction: alanine is first activated by ATP to form Ala-AMP and then transferred to the acceptor end of tRNA(Ala). Also edits incorrectly charged Ser-tRNA(Ala) and Gly-tRNA(Ala) via its editing domain. The sequence is that of Alanine--tRNA ligase from Syntrophomonas wolfei subsp. wolfei (strain DSM 2245B / Goettingen).